We begin with the raw amino-acid sequence, 607 residues long: Glutamine--fructose-6-phosphate aminotransferase [isomerizing] (607 aa).

The Nucleophile; for GATase activity role is filled by Cys-2. The Glutamine amidotransferase type-2 domain maps to 2 to 217 (CGIVGIVGHS…DGDWAVVRRD (216 aa)). 2 SIS domains span residues 283–422 (LPFD…ARGV) and 455–597 (IARE…VDQP). Lys-602 acts as the For Fru-6P isomerization activity in catalysis.

As to quaternary structure, homodimer.

Its subcellular location is the cytoplasm. It catalyses the reaction D-fructose 6-phosphate + L-glutamine = D-glucosamine 6-phosphate + L-glutamate. Catalyzes the first step in hexosamine metabolism, converting fructose-6P into glucosamine-6P using glutamine as a nitrogen source. The chain is Glutamine--fructose-6-phosphate aminotransferase [isomerizing] from Mesorhizobium japonicum (strain LMG 29417 / CECT 9101 / MAFF 303099) (Mesorhizobium loti (strain MAFF 303099)).